Reading from the N-terminus, the 235-residue chain is Small ribosomal subunit protein uS3 (235 aa).

The 69-residue stretch at 39–107 (IRQYVFKALP…DVSLNIVEIR (69 aa)) folds into the KH type-2 domain.

It belongs to the universal ribosomal protein uS3 family. Part of the 30S ribosomal subunit. Forms a tight complex with proteins S10 and S14.

Its function is as follows. Binds the lower part of the 30S subunit head. Binds mRNA in the 70S ribosome, positioning it for translation. The protein is Small ribosomal subunit protein uS3 of Sphingopyxis alaskensis (strain DSM 13593 / LMG 18877 / RB2256) (Sphingomonas alaskensis).